A 252-amino-acid polypeptide reads, in one-letter code: Zinc finger protein 511 (252 aa).

3 consecutive C2H2-type zinc fingers follow at residues 80–105 (FACQ…HTLH), 107–130 (NVCS…LEWH), and 144–169 (YQCL…VRMH). The segment at 177–221 (FDKPKKSRSPASAEAPGDSGERSEGEAMEICSEPVAASPAPAGER) is disordered. At R240 the chain carries Omega-N-methylarginine.

This sequence belongs to the krueppel C2H2-type zinc-finger protein family.

The protein localises to the nucleus. May be involved in transcriptional regulation. In Homo sapiens (Human), this protein is Zinc finger protein 511.